Consider the following 337-residue polypeptide: Ribosomal RNA small subunit methyltransferase C (337 aa).

The protein belongs to the methyltransferase superfamily. RsmC family. As to quaternary structure, monomer.

It localises to the cytoplasm. It catalyses the reaction guanosine(1207) in 16S rRNA + S-adenosyl-L-methionine = N(2)-methylguanosine(1207) in 16S rRNA + S-adenosyl-L-homocysteine + H(+). Specifically methylates the guanine in position 1207 of 16S rRNA in the 30S particle. This chain is Ribosomal RNA small subunit methyltransferase C, found in Acinetobacter baumannii (strain ACICU).